We begin with the raw amino-acid sequence, 235 residues long: MTDETSGPAEPVTDAPGDAESPAQPKRRLRLLLTVAAVVLFLDVVTKVLAVRLLTPGQPVSIIGDTVTWTLVRNSGAAFSMATGYTWVLTLVATGVVIGIIWMGRRLVSPWWALGLGLILGGATGNLVDRFFRSPGPLRGHVVDFFSVGWWPVFNVADPSVVGGAILLVALSLFGFDFDTVGRRRPGEDAEPSAGASDSTPEAPAADGPDKPAGPVGPEDAAEESKTVGHQAEPS.

The interval 1-23 (MTDETSGPAEPVTDAPGDAESPA) is disordered. 3 helical membrane-spanning segments follow: residues 31–51 (LLLTVAAVVLFLDVVTKVLAV), 84–104 (GYTWVLTLVATGVVIGIIWMG), and 108–128 (VSPWWALGLGLILGGATGNLV). Residues D144 and D158 contribute to the active site. The helical transmembrane segment at 156 to 176 (VADPSVVGGAILLVALSLFGF) threads the bilayer. The segment at 185–235 (RPGEDAEPSAGASDSTPEAPAADGPDKPAGPVGPEDAAEESKTVGHQAEPS) is disordered. Positions 201–218 (PEAPAADGPDKPAGPVGP) are enriched in low complexity.

It belongs to the peptidase A8 family.

The protein localises to the cell membrane. The catalysed reaction is Release of signal peptides from bacterial membrane prolipoproteins. Hydrolyzes -Xaa-Yaa-Zaa-|-(S,diacylglyceryl)Cys-, in which Xaa is hydrophobic (preferably Leu), and Yaa (Ala or Ser) and Zaa (Gly or Ala) have small, neutral side chains.. It participates in protein modification; lipoprotein biosynthesis (signal peptide cleavage). Its function is as follows. This protein specifically catalyzes the removal of signal peptides from prolipoproteins. The chain is Lipoprotein signal peptidase from Mycolicibacterium smegmatis (strain ATCC 700084 / mc(2)155) (Mycobacterium smegmatis).